The sequence spans 172 residues: Galectin-related protein (172 aa).

N-acetylalanine is present on A2. Residues S22 and S25 each carry the phosphoserine modification. The region spanning 39 to 168 (PFCGHIKGGM…TIKINGDLQI (130 aa)) is the Galectin domain.

Monomer.

Functionally, does not bind lactose, and may not bind carbohydrates. This chain is Galectin-related protein (LGALSL), found in Homo sapiens (Human).